We begin with the raw amino-acid sequence, 610 residues long: DNA mismatch repair protein MutL (610 aa).

Belongs to the DNA mismatch repair MutL/HexB family.

This protein is involved in the repair of mismatches in DNA. It is required for dam-dependent methyl-directed DNA mismatch repair. May act as a 'molecular matchmaker', a protein that promotes the formation of a stable complex between two or more DNA-binding proteins in an ATP-dependent manner without itself being part of a final effector complex. The polypeptide is DNA mismatch repair protein MutL (Rickettsia africae (strain ESF-5)).